The chain runs to 635 residues: Threonine--tRNA ligase (635 aa).

One can recognise a TGS domain in the interval 1-61 (MVSIRLPDGS…DRDAALAIIT (61 aa)). The catalytic stretch occupies residues 242–533 (DHRKLGKQLD…LIEHHAGAMP (292 aa)). Residues Cys-333, His-384, and His-510 each contribute to the Zn(2+) site.

Belongs to the class-II aminoacyl-tRNA synthetase family. As to quaternary structure, homodimer. Zn(2+) serves as cofactor.

The protein localises to the cytoplasm. It carries out the reaction tRNA(Thr) + L-threonine + ATP = L-threonyl-tRNA(Thr) + AMP + diphosphate + H(+). In terms of biological role, catalyzes the attachment of threonine to tRNA(Thr) in a two-step reaction: L-threonine is first activated by ATP to form Thr-AMP and then transferred to the acceptor end of tRNA(Thr). Also edits incorrectly charged L-seryl-tRNA(Thr). The protein is Threonine--tRNA ligase of Burkholderia ambifaria (strain ATCC BAA-244 / DSM 16087 / CCUG 44356 / LMG 19182 / AMMD) (Burkholderia cepacia (strain AMMD)).